The following is a 418-amino-acid chain: Actin-related protein 3 (418 aa).

Position 2 is an N-acetylalanine (Ala-2). An N6-acetyllysine mark is found at Lys-240, Lys-244, Lys-251, and Lys-254.

This sequence belongs to the actin family. ARP3 subfamily. Component of the Arp2/3 complex composed of ACTR2/ARP2, ACTR3/ARP3, ARPC1B/p41-ARC, ARPC2/p34-ARC, ARPC3/p21-ARC, ARPC4/p20-ARC and ARPC5/p16-ARC. Interacts with WHDC1. Interacts weakly with MEFV. Interacts with AVIL.

The protein resides in the cytoplasm. Its subcellular location is the cytoskeleton. It is found in the cell projection. The protein localises to the nucleus. Its function is as follows. ATP-binding component of the Arp2/3 complex, a multiprotein complex that mediates actin polymerization upon stimulation by nucleation-promoting factor (NPF). The Arp2/3 complex mediates the formation of branched actin networks in the cytoplasm, providing the force for cell motility. Seems to contact the pointed end of the daughter actin filament. In podocytes, required for the formation of lamellipodia downstream of AVIL and PLCE1 regulation. In addition to its role in the cytoplasmic cytoskeleton, the Arp2/3 complex also promotes actin polymerization in the nucleus, thereby regulating gene transcription and repair of damaged DNA. The Arp2/3 complex promotes homologous recombination (HR) repair in response to DNA damage by promoting nuclear actin polymerization, leading to drive motility of double-strand breaks (DSBs). Plays a role in ciliogenesis. This Bos taurus (Bovine) protein is Actin-related protein 3 (ACTR3).